The chain runs to 834 residues: Striatin-interacting protein 2 (834 aa).

The interval 1–48 (MEDPAAPGTGGPPANGNGNGGGKGKQAAPKGREAFRSQRRESEGSVDC) is disordered. Gly residues predominate over residues 8–24 (GTGGPPANGNGNGGGKG). A compositionally biased stretch (basic and acidic residues) spans 30 to 43 (KGREAFRSQRRESE). S318, S329, and S354 each carry phosphoserine. The disordered stretch occupies residues 321–345 (SYTLDLGESQLAPPPSKLRGRRGSR). The segment at 360 to 382 (ERDLFKTEEPATEEEEESAGDGE) is disordered. The segment covering 369–379 (PATEEEEESAG) has biased composition (acidic residues).

The protein belongs to the STRIP family. As to quaternary structure, part of the core of STRIPAK complexes composed of PP2A catalytic and scaffolding subunits, the striatins (PP2A regulatory subunits), the striatin-associated proteins MOB4, STRIP1 and STRIP2, PDCD10 and members of the STE20 kinases, such as STK24 and STK26. Interacts with CTTNBP2NL.

It is found in the cytoplasm. In terms of biological role, plays a role in the regulation of cell morphology and cytoskeletal organization. Required in the control of cell shape. Calmodulin-binding scaffolding protein which is the center of the striatin-interacting phosphatase and kinase (STRIPAK) complexes. STRIPAK complexes have critical roles in protein (de)phosphorylation and are regulators of multiple signaling pathways including Hippo, MAPK, nuclear receptor and cytoskeleton remodeling. Different types of STRIPAK complexes are involved in a variety of biological processes such as cell growth, differentiation, apoptosis, metabolism and immune regulation. In Homo sapiens (Human), this protein is Striatin-interacting protein 2.